Reading from the N-terminus, the 666-residue chain is Semaphorin-7A (666 aa).

The disordered stretch occupies residues 1-21; the sequence is MTPPPPGRAAPSAPRARVPGP. Residues 1-44 form the signal peptide; the sequence is MTPPPPGRAAPSAPRARVPGPPARLGLPLRLRLLLLLWAAAASA. A compositionally biased stretch (low complexity) spans 9–21; the sequence is AAPSAPRARVPGP. Positions 53–490 constitute a Sema domain; that stretch reads RIFAVWKGHV…SQWEVSQVPL (438 aa). N105 carries an N-linked (GlcNAc...) asparagine glycan. C120 and C126 are disulfide-bonded. Asymmetric dimethylarginine is present on R135. A disulfide bond links C143 and C152. N-linked (GlcNAc...) asparagine glycosylation is found at N157 and N258. 7 disulfide bridges follow: C266–C366, C291–C335, C493–C511, C500–C541, C503–C518, C566–C613, and C587–C596. An interaction with integrins region spans residues 267-269; sequence RGD. The Cell attachment site signature appears at 267–269; that stretch reads RGD. The N-linked (GlcNAc...) asparagine glycan is linked to N330. One can recognise an Ig-like C2-type domain in the interval 544–629; it reads PKPDKAPLQK…YFREAQHWQL (86 aa). The N-linked (GlcNAc...) asparagine glycan is linked to N602. A lipid anchor (GPI-anchor amidated alanine) is attached at A648. Positions 649–666 are cleaved as a propeptide — removed in mature form; sequence ASLWLGVLPTLTLGLLVH.

It belongs to the semaphorin family. Interacts with ITGA1 and ITGB1. Interacts with PLXNC1. As to expression, detected in skin keratinocytes and on endothelial cells from skin blood vessels (at protein level). Expressed in fibroblasts, keratinocytes, melanocytes, placenta, testis, ovary, spleen, brain, spinal cord, lung, heart, adrenal gland, lymph nodes, thymus, intestine and kidney.

The protein resides in the cell membrane. Its function is as follows. Plays an important role in integrin-mediated signaling and functions both in regulating cell migration and immune responses. Promotes formation of focal adhesion complexes, activation of the protein kinase PTK2/FAK1 and subsequent phosphorylation of MAPK1 and MAPK3. Promotes production of pro-inflammatory cytokines by monocytes and macrophages. Plays an important role in modulating inflammation and T-cell-mediated immune responses. Promotes axon growth in the embryonic olfactory bulb. Promotes attachment, spreading and dendrite outgrowth in melanocytes. This Homo sapiens (Human) protein is Semaphorin-7A (SEMA7A).